The following is a 197-amino-acid chain: Large ribosomal subunit protein uL13C (197 aa).

The protein belongs to the universal ribosomal protein uL13 family. Component of the large ribosomal subunit (LSU). Mature yeast ribosomes consist of a small (40S) and a large (60S) subunit. The 40S small subunit contains 1 molecule of ribosomal RNA (18S rRNA) and at least 33 different proteins. The large 60S subunit contains 3 rRNA molecules (25S, 5.8S and 5S rRNA) and at least 46 different proteins.

Its subcellular location is the cytoplasm. The protein resides in the nucleus. It localises to the nucleolus. Functionally, component of the ribosome, a large ribonucleoprotein complex responsible for the synthesis of proteins in the cell. The small ribosomal subunit (SSU) binds messenger RNAs (mRNAs) and translates the encoded message by selecting cognate aminoacyl-transfer RNA (tRNA) molecules. The large subunit (LSU) contains the ribosomal catalytic site termed the peptidyl transferase center (PTC), which catalyzes the formation of peptide bonds, thereby polymerizing the amino acids delivered by tRNAs into a polypeptide chain. The nascent polypeptides leave the ribosome through a tunnel in the LSU and interact with protein factors that function in enzymatic processing, targeting, and the membrane insertion of nascent chains at the exit of the ribosomal tunnel. In Schizosaccharomyces pombe (strain 972 / ATCC 24843) (Fission yeast), this protein is Large ribosomal subunit protein uL13C (rpl1603).